The sequence spans 610 residues: Sulfite reductase [NADPH] flavoprotein alpha-component (610 aa).

The region spanning 68 to 206 (IIVISASQTG…EVDKWKEKVV (139 aa)) is the Flavodoxin-like domain. FMN-binding positions include 74–79 (SQTGNA), 121–124 (STHG), and 157–166 (LGDRSYEYFA). Positions 243–459 (EFPLIAYLLN…VESNDNFRLP (217 aa)) constitute an FAD-binding FR-type domain. FAD contacts are provided by residues T331, S365, 397 to 400 (RFYS), 415 to 417 (TVS), Y421, and 430 to 433 (GGAS). NADP(+) contacts are provided by residues 530–531 (SR), 536–540 (KVYVQ), and D572. Y610 provides a ligand contact to FAD.

Belongs to the NADPH-dependent sulphite reductase flavoprotein subunit CysJ family. This sequence in the N-terminal section; belongs to the flavodoxin family. It in the C-terminal section; belongs to the flavoprotein pyridine nucleotide cytochrome reductase family. As to quaternary structure, alpha(8)-beta(8). The alpha component is a flavoprotein, the beta component is a hemoprotein. The cofactor is FAD. Requires FMN as cofactor.

The enzyme catalyses hydrogen sulfide + 3 NADP(+) + 3 H2O = sulfite + 3 NADPH + 4 H(+). Its pathway is sulfur metabolism; hydrogen sulfide biosynthesis; hydrogen sulfide from sulfite (NADPH route): step 1/1. Its function is as follows. Component of the sulfite reductase complex that catalyzes the 6-electron reduction of sulfite to sulfide. This is one of several activities required for the biosynthesis of L-cysteine from sulfate. The flavoprotein component catalyzes the electron flow from NADPH -&gt; FAD -&gt; FMN to the hemoprotein component. In Blochmanniella floridana, this protein is Sulfite reductase [NADPH] flavoprotein alpha-component.